The sequence spans 764 residues: Sesterfisherol synthase (764 aa).

Residues 2-331 (EVWEHSRPIA…SPRHHAWRNN (330 aa)) form a terpene cyclase region. Residue D95 coordinates Mg(2+). Substrate contacts are provided by residues D95, 187–190 (RRDD), N231, 235–239 (SFDRE), and 324–325 (RH). Residues 95-99 (DDGYE) carry the DDXXD 1 motif. The NSE/DTE motif lies at 231 to 239 (NDYWSFDRE). Positions 332–759 (SRNGLKPANH…PMLRLLLEKL (428 aa)) are prenyltransferase. Positions 347–372 (LITPSNNLNSSKGSEEQMQDSDNGTR) are disordered. The span at 348–358 (ITPSNNLNSSK) shows a compositional bias: polar residues. Positions 476, 479, and 508 each coordinate isopentenyl diphosphate. Mg(2+) contacts are provided by D515 and D519. A DDXXD 2 motif is present at residues 515–519 (DDIED). R524 serves as a coordination point for dimethylallyl diphosphate. Residue R525 participates in isopentenyl diphosphate binding. 6 residues coordinate dimethylallyl diphosphate: K602, T603, Q638, N645, K655, and K665.

This sequence in the N-terminal section; belongs to the terpene synthase family. The protein in the C-terminal section; belongs to the FPP/GGPP synthase family. As to quaternary structure, hexamer. It depends on Mg(2+) as a cofactor.

It carries out the reaction isopentenyl diphosphate + (2E,6E)-farnesyl diphosphate = (2E,6E,10E)-geranylgeranyl diphosphate + diphosphate. It catalyses the reaction isopentenyl diphosphate + (2E,6E,10E)-geranylgeranyl diphosphate = (2E,6E,10E,14E)-geranylfarnesyl diphosphate + diphosphate. The enzyme catalyses (2E,6E,10E,14E)-geranylfarnesyl diphosphate + H2O = sesterfisherol + diphosphate. It functions in the pathway secondary metabolite biosynthesis; terpenoid biosynthesis. Bifunctional terpene synthase; part of the gene cluster that mediates the biosynthesis of sesterfisheric acid. The bifunctional terpene synthase NfSS converts dimethylallyl diphosphate (DMAPP) and isopentenyl diphosphate (IPP) into sesterfisherol. The C-terminal prenyltransferase (PT) domain of NfSS catalyzes formation of geranylfarnesyl pyrophosphate (GFPP), whereas the N-terminal terpene cyclase (TC) domain catalyzes the cyclization of GFPP to sesterfisherol. The cytochrome P450 monooxygenase NfP450 then catalyzes oxidative modifications of sesterfisherol into sesterfisheric acid. The polypeptide is Sesterfisherol synthase (Neosartorya fischeri (strain ATCC 1020 / DSM 3700 / CBS 544.65 / FGSC A1164 / JCM 1740 / NRRL 181 / WB 181) (Aspergillus fischerianus)).